Here is a 418-residue protein sequence, read N- to C-terminus: Voltage-gated ClC-type chloride channel ClcB (418 aa).

The next 10 helical transmembrane spans lie at 5 to 25, 54 to 74, 146 to 166, 168 to 188, 222 to 242, 258 to 278, 291 to 311, 316 to 336, 352 to 372, and 380 to 400; these read LLIA…FRHA, LLTP…WQKF, LWIA…PLAG, LFIA…PVII, ALII…LTLM, WQLA…PAVW, APPL…AVLA, GAPG…GMLY, LLLG…APIM, and MTGE…ASVI.

Belongs to the chloride channel (TC 2.A.49) family. ClcB subfamily.

It localises to the cell inner membrane. In terms of biological role, probably acts as an electrical shunt for an outwardly-directed proton pump that is linked to amino acid decarboxylation, as part of the extreme acid resistance (XAR) response. The polypeptide is Voltage-gated ClC-type chloride channel ClcB (Escherichia coli (strain SMS-3-5 / SECEC)).